The following is a 1258-amino-acid chain: Cohesin subunit SA-1 (1258 aa).

The tract at residues 1 to 59 (MITSELPVLQDSTNETTAHSDAGSELEETEVKGKRKRGRPGRPPSTNKKPRKSPGEKSR) is disordered. Over residues 10–19 (QDSTNETTAH) the composition is skewed to polar residues. Ser24 bears the Phosphoserine mark. In terms of domain architecture, SCD spans 296–381 (FVHRYRDAIA…NRFKDRIVSM (86 aa)). Phosphoserine is present on residues Ser756, Ser1062, and Ser1065. Residues 1055-1148 (GGEDDRMSVN…EHGSEPDFLH (94 aa)) form a disordered region. Over residues 1062 to 1075 (SVNSGSSSSKTSSV) the composition is skewed to low complexity. A compositionally biased stretch (basic residues) spans 1076-1087 (RSKKGRPPLHRK). Ser1093 bears the Phosphoserine mark. Residues 1095–1106 (DNTWLNRTDTMI) show a composition bias toward polar residues. A compositionally biased stretch (basic and acidic residues) spans 1137-1146 (ESEHGSEPDF). Lys1161 participates in a covalent cross-link: Glycyl lysine isopeptide (Lys-Gly) (interchain with G-Cter in SUMO2).

This sequence belongs to the SCC3 family. In terms of assembly, cohesin complexes are composed of a heterodimer between a SMC1 protein (SMC1A or SMC1B) and SMC3, which are attached via their hinge domain, and RAD21 which link them at their heads, and one STAG protein (STAG1, STAG2 or STAG3). In cohesin complexes, STAG1 is mutually exclusive with STAG2 and STAG3. Interacts directly with RAD21 in cohesin complex. The cohesin complex interacts with the cohesin loading complex subunits NIPBL/Scc2 (via HEAT repeats) and MAU2/Scc4. NIPBL directly contacts all members of the complex, RAD21, SMC1A/B, SMC3 and STAG1. In terms of processing, phosphorylated by PLK1. The large dissociation of cohesin from chromosome arms during prophase is partly due to its phosphorylation.

It is found in the nucleus. It localises to the chromosome. Component of cohesin complex, a complex required for the cohesion of sister chromatids after DNA replication. The cohesin complex apparently forms a large proteinaceous ring within which sister chromatids can be trapped. At anaphase, the complex is cleaved and dissociates from chromatin, allowing sister chromatids to segregate. The cohesin complex may also play a role in spindle pole assembly during mitosis. This chain is Cohesin subunit SA-1 (Stag1), found in Mus musculus (Mouse).